The following is a 406-amino-acid chain: Erythromycin esterase type I (406 aa).

Its function is as follows. This enzyme confers resistance to erythromycin through inactivation by hydrolyzing the lactone ring of the antibiotic. This Escherichia coli protein is Erythromycin esterase type I (ereA).